Consider the following 101-residue polypeptide: MERPDKAALNALQPPEFRNESSLASTLKTLLFFTALMITVPIGLYFTTKSYIFEGALGMSNRDSYFYAAIVAVVAVHVVLALFVYVAWNEGSRQWREGKQD.

Residues 1–25 lie on the Cytoplasmic side of the membrane; sequence MERPDKAALNALQPPEFRNESSLAS. The helical transmembrane segment at 26 to 46 threads the bilayer; the sequence is TLKTLLFFTALMITVPIGLYF. Residues 47 to 65 are Lumenal-facing; that stretch reads TTKSYIFEGALGMSNRDSY. Residues 66–86 form a helical membrane-spanning segment; that stretch reads FYAAIVAVVAVHVVLALFVYV. At 87-101 the chain is on the cytoplasmic side; that stretch reads AWNEGSRQWREGKQD.

It belongs to the VMA21 family. As to quaternary structure, associates with the V0 complex of the vacuolar ATPase (V-ATPase). Interacts with ATP6AP2.

The protein resides in the endoplasmic reticulum membrane. The protein localises to the endoplasmic reticulum-Golgi intermediate compartment membrane. It is found in the cytoplasmic vesicle. It localises to the COPII-coated vesicle membrane. Required for the assembly of the V0 complex of the vacuolar ATPase (V-ATPase) in the endoplasmic reticulum. This Homo sapiens (Human) protein is Vacuolar ATPase assembly integral membrane protein VMA21.